Here is a 141-residue protein sequence, read N- to C-terminus: Nucleoside diphosphate kinase (141 aa).

Residues Lys11, Phe59, Arg87, Thr93, Arg104, and Asn114 each contribute to the ATP site. His117 functions as the Pros-phosphohistidine intermediate in the catalytic mechanism.

The protein belongs to the NDK family. In terms of assembly, homotetramer. Mg(2+) serves as cofactor.

Its subcellular location is the cytoplasm. It catalyses the reaction a 2'-deoxyribonucleoside 5'-diphosphate + ATP = a 2'-deoxyribonucleoside 5'-triphosphate + ADP. The catalysed reaction is a ribonucleoside 5'-diphosphate + ATP = a ribonucleoside 5'-triphosphate + ADP. Functionally, major role in the synthesis of nucleoside triphosphates other than ATP. The ATP gamma phosphate is transferred to the NDP beta phosphate via a ping-pong mechanism, using a phosphorylated active-site intermediate. This is Nucleoside diphosphate kinase from Yersinia enterocolitica serotype O:8 / biotype 1B (strain NCTC 13174 / 8081).